Here is a 663-residue protein sequence, read N- to C-terminus: uncharacterized protein (663 aa).

207-214 (GPPGTGKT) lines the ATP pocket.

Belongs to the DNA2/NAM7 helicase family.

This is an uncharacterized protein from Methanocaldococcus jannaschii (strain ATCC 43067 / DSM 2661 / JAL-1 / JCM 10045 / NBRC 100440) (Methanococcus jannaschii).